A 590-amino-acid polypeptide reads, in one-letter code: Keratin, type II cytoskeletal 5 (590 aa).

Low complexity predominate over residues 1–18 (MSRQSSVSFRSGGSRSFS). The interval 1–20 (MSRQSSVSFRSGGSRSFSTA) is disordered. Residues 1–167 (MSRQSSVSFR…DPSIQRVRTE (167 aa)) form a head region. Residues Ser-5, Ser-8, Ser-16, and Ser-21 each carry the phosphoserine modification. Thr-24 bears the Phosphothreonine; by CDK1 mark. A phosphoserine mark is found at Ser-26, Ser-36, Ser-50, Ser-64, Ser-71, Ser-75, and Ser-82. Residue Thr-151 is modified to Phosphothreonine; by CDK1. Residues 168-203 (EREQIKTLNNKFASFIDKVRFLEQQNKVLDTKWTLL) form a coil 1A region. In terms of domain architecture, IF rod spans 168–481 (EREQIKTLNN…KLLEGEECRL (314 aa)). The tract at residues 204–222 (QEQGTKTVRQNLEPLFEQY) is linker 1. The segment at 223–315 (INNLRRQLDS…FFDAELSQMQ (93 aa)) is coil 1B. Residues 316-338 (THVSDTSVVLSMDNNRNLDLDSI) are linker 12. The segment at 339 to 477 (IAEVKAQYEE…ATYRKLLEGE (139 aa)) is coil 2. Positions 478-590 (ECRLSGEGVG…TSSSRKSFKS (113 aa)) are tail. Residues 566-590 (GSGGGSSSSVKFVSTTSSSRKSFKS) are disordered. Residues 572–590 (SSSVKFVSTTSSSRKSFKS) show a composition bias toward low complexity.

The protein belongs to the intermediate filament family. In terms of assembly, heterodimer of a type I and a type II keratin. Heterodimer with type I keratin KRT25 leading to the formation of keratin intermediate filament (KIF) network. Forms a heterodimer (via 2B domains) with KRT14 (via 2B domains). Interacts with PLEC isoform 1C, when in a heterodimer with KRT14. Interacts with TCHP. Interacts with EPPK1. Interacts with AMELX. Interacts with PKP1 (via N-terminus) and PKP2. Post-translationally, phosphorylated by CDK1, AURKB and Rho-kinase, phosphorylation is regulated by the cell cycle. Thr-24 phosphorylation, mediated by CDK1, peaks during prometaphase or metaphase cells with phosphorylated filamentous structures evident throughout the cytoplasm during early mitosis. CDK1 phosphorylates Thr-24 in mitotic cells at the site of injury. O-glycosylated. Expressed in corneal epithelium (at protein level). Expressed in keratinocytes (at protein level).

It localises to the cytoplasm. In terms of biological role, required for the formation of keratin intermediate filaments in the basal epidermis and maintenance of the skin barrier in response to mechanical stress. Regulates the recruitment of Langerhans cells to the epidermis, potentially by modulation of the abundance of macrophage chemotactic cytokines, macrophage inflammatory cytokines and CTNND1 localization in keratinocytes. This chain is Keratin, type II cytoskeletal 5 (KRT5), found in Homo sapiens (Human).